The following is a 217-amino-acid chain: Small ribosomal subunit protein uS3 (217 aa).

Positions 29–97 (ADYLHEDLAI…AQLNKLTGKQ (69 aa)) constitute a KH type-2 domain.

It belongs to the universal ribosomal protein uS3 family. In terms of assembly, part of the 30S ribosomal subunit. Forms a tight complex with proteins S10 and S14.

Binds the lower part of the 30S subunit head. Binds mRNA in the 70S ribosome, positioning it for translation. This Streptococcus mutans serotype c (strain ATCC 700610 / UA159) protein is Small ribosomal subunit protein uS3.